Here is a 313-residue protein sequence, read N- to C-terminus: Ribose-phosphate pyrophosphokinase (313 aa).

Residues 40–42 (DGE) and 98–99 (RQ) each bind ATP. Positions 132 and 172 each coordinate Mg(2+). Residue K195 is part of the active site. D-ribose 5-phosphate-binding positions include R197, D221, and 225–229 (DTAGT).

Belongs to the ribose-phosphate pyrophosphokinase family. Class I subfamily. As to quaternary structure, homohexamer. Mg(2+) is required as a cofactor.

It is found in the cytoplasm. It carries out the reaction D-ribose 5-phosphate + ATP = 5-phospho-alpha-D-ribose 1-diphosphate + AMP + H(+). It functions in the pathway metabolic intermediate biosynthesis; 5-phospho-alpha-D-ribose 1-diphosphate biosynthesis; 5-phospho-alpha-D-ribose 1-diphosphate from D-ribose 5-phosphate (route I): step 1/1. Functionally, involved in the biosynthesis of the central metabolite phospho-alpha-D-ribosyl-1-pyrophosphate (PRPP) via the transfer of pyrophosphoryl group from ATP to 1-hydroxyl of ribose-5-phosphate (Rib-5-P). This Porphyromonas gingivalis (strain ATCC BAA-308 / W83) protein is Ribose-phosphate pyrophosphokinase.